The primary structure comprises 117 residues: UPF0342 protein Bcer98_0695 (117 aa).

It belongs to the UPF0342 family.

The polypeptide is UPF0342 protein Bcer98_0695 (Bacillus cytotoxicus (strain DSM 22905 / CIP 110041 / 391-98 / NVH 391-98)).